We begin with the raw amino-acid sequence, 844 residues long: Patched-related protein 9 (844 aa).

One can recognise an SSD domain in the interval 264–421 (LIPWMPWTSL…VTFFNAVMSL (158 aa)).

This sequence belongs to the patched family.

The chain is Patched-related protein 9 (ptr-9) from Caenorhabditis elegans.